The chain runs to 299 residues: 4-diphosphocytidyl-2-C-methyl-D-erythritol kinase (299 aa).

The active site involves lysine 17. 99–109 (PLASGLGGGSS) contacts ATP. The active site involves aspartate 142.

Belongs to the GHMP kinase family. IspE subfamily.

The catalysed reaction is 4-CDP-2-C-methyl-D-erythritol + ATP = 4-CDP-2-C-methyl-D-erythritol 2-phosphate + ADP + H(+). Its pathway is isoprenoid biosynthesis; isopentenyl diphosphate biosynthesis via DXP pathway; isopentenyl diphosphate from 1-deoxy-D-xylulose 5-phosphate: step 3/6. In terms of biological role, catalyzes the phosphorylation of the position 2 hydroxy group of 4-diphosphocytidyl-2C-methyl-D-erythritol. The polypeptide is 4-diphosphocytidyl-2-C-methyl-D-erythritol kinase (Deinococcus radiodurans (strain ATCC 13939 / DSM 20539 / JCM 16871 / CCUG 27074 / LMG 4051 / NBRC 15346 / NCIMB 9279 / VKM B-1422 / R1)).